Reading from the N-terminus, the 236-residue chain is Uridylate kinase (236 aa).

12–15 (KLSG) provides a ligand contact to ATP. Residues 20–25 (GEKGFG) are involved in allosteric activation by GTP. Residue G54 participates in UMP binding. Positions 55 and 59 each coordinate ATP. Residues D72 and 133–140 (TGNPYFST) each bind UMP. Residues N161, Y166, and D169 each coordinate ATP.

The protein belongs to the UMP kinase family. In terms of assembly, homohexamer.

The protein resides in the cytoplasm. The catalysed reaction is UMP + ATP = UDP + ADP. It participates in pyrimidine metabolism; CTP biosynthesis via de novo pathway; UDP from UMP (UMPK route): step 1/1. With respect to regulation, allosterically activated by GTP. Inhibited by UTP. Functionally, catalyzes the reversible phosphorylation of UMP to UDP. The protein is Uridylate kinase of Alkaliphilus oremlandii (strain OhILAs) (Clostridium oremlandii (strain OhILAs)).